The following is a 397-amino-acid chain: Enoyl-[acyl-carrier-protein] reductase [NADH] (397 aa).

Residues 48–53 (GASTGY), 74–75 (FE), 111–112 (DA), and 139–140 (VA) contribute to the NAD(+) site. Y225 contacts substrate. The active-site Proton donor is Y235. NAD(+) is bound by residues K244 and 273–275 (VVT).

This sequence belongs to the TER reductase family. Monomer.

The enzyme catalyses a 2,3-saturated acyl-[ACP] + NAD(+) = a (2E)-enoyl-[ACP] + NADH + H(+). Its pathway is lipid metabolism; fatty acid biosynthesis. Functionally, involved in the final reduction of the elongation cycle of fatty acid synthesis (FAS II). Catalyzes the reduction of a carbon-carbon double bond in an enoyl moiety that is covalently linked to an acyl carrier protein (ACP). The protein is Enoyl-[acyl-carrier-protein] reductase [NADH] of Burkholderia thailandensis (strain ATCC 700388 / DSM 13276 / CCUG 48851 / CIP 106301 / E264).